Here is a 424-residue protein sequence, read N- to C-terminus: MNLLIKGGRVIDPSQGIDANLDVLIADGVVLELGQGLAAPEGTPAIDASGLIVTPGLIDMHVHLRDPGLEYKEDIATGSRSAAAGGFTSVACMPNTSPVIDSKAIASYIINKAKSEALVNVFPIGCITKGGKGESLAEMGELKEAGCVAVSDDGKPVCNSELMRRALEYAKGIGIAVISHSEDLALVGEGVMNEGFVSTELGLKGIPWAAEDIAVAREVYLAEFAGAPVHIAHISTVGSARIIRNAKARGVKVTCETAPHYFTLTDEAVRGYETNAKMNPPLRSAADVEAMKAGLADGTIDAIATDHAPHHPDEKDVEFNVALNGIVGLETSLSLSLKLVEEGRLDLNQLVSLMSCTPAKILGLDRGTLKVGAVGDVTIIDPAKEWQVEAAKLESKSKNSPFLGWKMKGRAVYTVVKGQVVYQA.

Zn(2+)-binding residues include His-61 and His-63. Residues 63-65 (HLR) and Asn-95 contribute to the substrate site. Residues Asp-153, His-180, and His-233 each coordinate Zn(2+). Asn-279 contributes to the substrate binding site. Residue Asp-306 coordinates Zn(2+). The active site involves Asp-306. His-310 lines the substrate pocket.

The protein belongs to the metallo-dependent hydrolases superfamily. DHOase family. Class I DHOase subfamily. Zn(2+) serves as cofactor.

It catalyses the reaction (S)-dihydroorotate + H2O = N-carbamoyl-L-aspartate + H(+). Its pathway is pyrimidine metabolism; UMP biosynthesis via de novo pathway; (S)-dihydroorotate from bicarbonate: step 3/3. Functionally, catalyzes the reversible cyclization of carbamoyl aspartate to dihydroorotate. The chain is Dihydroorotase from Citrifermentans bemidjiense (strain ATCC BAA-1014 / DSM 16622 / JCM 12645 / Bem) (Geobacter bemidjiensis).